A 563-amino-acid chain; its full sequence is Arginine--tRNA ligase (563 aa).

The short motif at 120-130 (PNIAKPFHVGH) is the 'HIGH' region element.

Belongs to the class-I aminoacyl-tRNA synthetase family. As to quaternary structure, monomer.

Its subcellular location is the cytoplasm. It carries out the reaction tRNA(Arg) + L-arginine + ATP = L-arginyl-tRNA(Arg) + AMP + diphosphate. The protein is Arginine--tRNA ligase of Clostridium botulinum (strain Alaska E43 / Type E3).